The sequence spans 233 residues: Cilia- and flagella-associated protein 299 (233 aa).

The protein resides in the cytoplasm. The protein localises to the nucleus. Functionally, may be involved in spermatogenesis. This chain is Cilia- and flagella-associated protein 299, found in Xenopus laevis (African clawed frog).